The sequence spans 131 residues: Small ribosomal subunit protein uS8 (131 aa).

The protein belongs to the universal ribosomal protein uS8 family. Part of the 30S ribosomal subunit. Contacts proteins S5 and S12.

One of the primary rRNA binding proteins, it binds directly to 16S rRNA central domain where it helps coordinate assembly of the platform of the 30S subunit. The protein is Small ribosomal subunit protein uS8 of Verminephrobacter eiseniae (strain EF01-2).